A 122-amino-acid chain; its full sequence is Small ribosomal subunit protein uS13 (122 aa).

A disordered region spans residues 95–122 (SLPCRGQRTSTNARTRKGPKRAAVKKKK). Residues 108–122 (RTRKGPKRAAVKKKK) show a composition bias toward basic residues.

The protein belongs to the universal ribosomal protein uS13 family. As to quaternary structure, part of the 30S ribosomal subunit. Forms a loose heterodimer with protein S19. Forms two bridges to the 50S subunit in the 70S ribosome.

Located at the top of the head of the 30S subunit, it contacts several helices of the 16S rRNA. In the 70S ribosome it contacts the 23S rRNA (bridge B1a) and protein L5 of the 50S subunit (bridge B1b), connecting the 2 subunits; these bridges are implicated in subunit movement. Contacts the tRNAs in the A and P-sites. This is Small ribosomal subunit protein uS13 from Desulforapulum autotrophicum (strain ATCC 43914 / DSM 3382 / VKM B-1955 / HRM2) (Desulfobacterium autotrophicum).